Reading from the N-terminus, the 275-residue chain is Translation initiation factor 2 subunit alpha (275 aa).

In terms of domain architecture, S1 motif spans 12–83; it reads GEFVVATVKN…EKGHIDLSLK (72 aa).

It belongs to the eIF-2-alpha family. Heterotrimer composed of an alpha, a beta and a gamma chain.

Its function is as follows. eIF-2 functions in the early steps of protein synthesis by forming a ternary complex with GTP and initiator tRNA. The chain is Translation initiation factor 2 subunit alpha from Thermococcus kodakarensis (strain ATCC BAA-918 / JCM 12380 / KOD1) (Pyrococcus kodakaraensis (strain KOD1)).